A 238-amino-acid chain; its full sequence is uncharacterized protein (238 aa).

An S4 RNA-binding domain is found at 1–64 (MRLDKYLSKS…KPKKNVYLML (64 aa)). The active-site Nucleophile is the aspartate 103.

Belongs to the pseudouridine synthase RsuA family.

It carries out the reaction a uridine in RNA = a pseudouridine in RNA. This is an uncharacterized protein from Aquifex aeolicus (strain VF5).